Reading from the N-terminus, the 433-residue chain is Enolase (433 aa).

A (2R)-2-phosphoglycerate-binding site is contributed by Gln-167. The Proton donor role is filled by Glu-209. Mg(2+) contacts are provided by Asp-246, Glu-291, and Asp-318. (2R)-2-phosphoglycerate-binding residues include Lys-343, Arg-372, Ser-373, and Lys-394. The Proton acceptor role is filled by Lys-343.

Belongs to the enolase family. As to quaternary structure, component of the RNA degradosome, a multiprotein complex involved in RNA processing and mRNA degradation. Mg(2+) is required as a cofactor.

The protein resides in the cytoplasm. It is found in the secreted. It localises to the cell surface. The enzyme catalyses (2R)-2-phosphoglycerate = phosphoenolpyruvate + H2O. The protein operates within carbohydrate degradation; glycolysis; pyruvate from D-glyceraldehyde 3-phosphate: step 4/5. Catalyzes the reversible conversion of 2-phosphoglycerate (2-PG) into phosphoenolpyruvate (PEP). It is essential for the degradation of carbohydrates via glycolysis. This Hamiltonella defensa subsp. Acyrthosiphon pisum (strain 5AT) protein is Enolase.